Reading from the N-terminus, the 119-residue chain is MMKLYSLVIIATLAAAAFAATSEEISAAVSEIISQHQQDLERYAKIVERGEEPKKYIRCSKQLGEKCDLNCECCGAAAYCEDIVYICKEKISDNSILNAFGQAMTAMGNAVSRYYCDAE.

The N-terminal stretch at 1-19 is a signal peptide; that stretch reads MMKLYSLVIIATLAAAAFA. 4 cysteine pairs are disulfide-bonded: cysteine 59/cysteine 74, cysteine 67/cysteine 80, cysteine 71/cysteine 116, and cysteine 73/cysteine 87.

It belongs to the neurotoxin 25 family. ICK-8 subfamily. In terms of tissue distribution, expressed by the venom gland.

Its subcellular location is the secreted. Its function is as follows. Ion channel inhibitor. The polypeptide is Toxin ICK-9 (Trittame loki (Brush-footed trapdoor spider)).